The primary structure comprises 323 residues: Annexin A5 (323 aa).

Annexin repeat units lie at residues Phe-17–Val-88, Pro-89–Gln-160, Gly-172–Lys-244, and Ser-248–Gly-319.

Belongs to the annexin family.

Calcium/phospholipid-binding protein which promotes membrane fusion and is involved in exocytosis. This chain is Annexin A5, found in Cynops pyrrhogaster (Japanese fire-bellied newt).